Consider the following 60-residue polypeptide: uncharacterized protein (60 aa).

Residues Ser38–Tyr58 form a helical membrane-spanning segment.

The protein localises to the membrane. This is an uncharacterized protein from Saccharomyces cerevisiae (strain ATCC 204508 / S288c) (Baker's yeast).